Reading from the N-terminus, the 399-residue chain is Zinc finger TRAF-type-containing protein 1 (399 aa).

Over residues 1–13 (MSGAEEAGGGGPA) the composition is skewed to gly residues. The disordered stretch occupies residues 1–21 (MSGAEEAGGGGPAAGPAGAVP). The RING-type; degenerate zinc-finger motif lies at 106 to 151 (CTVCLDLPKASVYQCTNGHLMCAGCFIHLLADARLKEEQATCPNCR). Residues 152-210 (CEISKSLCCRNLAVEKAVSELPSECGFCLRQFPRSLLERHQKEECQDRVTQCKYKRIGC) form a TRAF-type zinc finger.

Belongs to the ZFTRAF1 family. Interacts with LGALS3. Expressed in heart, brain, liver, testis and kidney.

It localises to the cytoplasm. Its subcellular location is the perinuclear region. This Mus musculus (Mouse) protein is Zinc finger TRAF-type-containing protein 1.